Here is a 312-residue protein sequence, read N- to C-terminus: Ribosomal RNA small subunit methyltransferase H (312 aa).

Residues 33-35 (SGH), Asp-53, Phe-80, Asp-101, and Gln-108 contribute to the S-adenosyl-L-methionine site.

It belongs to the methyltransferase superfamily. RsmH family.

It is found in the cytoplasm. The catalysed reaction is cytidine(1402) in 16S rRNA + S-adenosyl-L-methionine = N(4)-methylcytidine(1402) in 16S rRNA + S-adenosyl-L-homocysteine + H(+). In terms of biological role, specifically methylates the N4 position of cytidine in position 1402 (C1402) of 16S rRNA. This is Ribosomal RNA small subunit methyltransferase H from Desulforapulum autotrophicum (strain ATCC 43914 / DSM 3382 / VKM B-1955 / HRM2) (Desulfobacterium autotrophicum).